A 374-amino-acid polypeptide reads, in one-letter code: LRR repeats and ubiquitin-like domain-containing protein At2g30105 (374 aa).

One can recognise a Ubiquitin-like domain in the interval isoleucine 13 to histidine 87. 9 LRR repeats span residues tryptophan 128–cysteine 151, glycine 152–phenylalanine 175, serine 177–serine 200, leucine 201–leucine 224, threonine 225–threonine 248, leucine 250–cysteine 270, phenylalanine 272–leucine 293, arginine 294–methionine 316, and leucine 318–glycine 340.

The sequence is that of LRR repeats and ubiquitin-like domain-containing protein At2g30105 from Arabidopsis thaliana (Mouse-ear cress).